Here is a 206-residue protein sequence, read N- to C-terminus: Ribosomal RNA large subunit methyltransferase E (206 aa).

5 residues coordinate S-adenosyl-L-methionine: Gly-61, Trp-63, Asp-81, Asp-97, and Asp-122. The active-site Proton acceptor is the Lys-162.

Belongs to the class I-like SAM-binding methyltransferase superfamily. RNA methyltransferase RlmE family.

Its subcellular location is the cytoplasm. The catalysed reaction is uridine(2552) in 23S rRNA + S-adenosyl-L-methionine = 2'-O-methyluridine(2552) in 23S rRNA + S-adenosyl-L-homocysteine + H(+). In terms of biological role, specifically methylates the uridine in position 2552 of 23S rRNA at the 2'-O position of the ribose in the fully assembled 50S ribosomal subunit. In Neisseria meningitidis serogroup C / serotype 2a (strain ATCC 700532 / DSM 15464 / FAM18), this protein is Ribosomal RNA large subunit methyltransferase E.